The chain runs to 648 residues: Phosphatidylinositol polyphosphate 5-phosphatase type IV (648 aa).

The tract at residues 1 to 64 (MPSKSACLRH…PLSMPAKPSN (64 aa)) is disordered. The span at 36–54 (TSASLPAADSQSSQTNSMP) shows a compositional bias: polar residues. Repeat copies occupy residues 59-62 (PAKP) and 76-79 (PQPP). Residues 59–243 (PAKPSNQNLQ…AHSNLGPSRP (185 aa)) form a 4 X 4 AA repeats of P-X-X-P region. A disordered region spans residues 99 to 158 (RFRGSQEDLTVQNGASPCRGSLQDSVAQSPAYSRPLPCLSTSLQEIPKPRRATGSEGGSP). Ser-103 carries the post-translational modification Phosphoserine. Positions 120-129 (LQDSVAQSPA) are enriched in polar residues. Repeat 3 spans residues 147 to 150 (PRRA). Residue Thr-197 is modified to Phosphothreonine. Repeat 4 spans residues 240-243 (PSRP). A phosphoserine mark is found at Ser-245 and Ser-260. Position 645 is a cysteine methyl ester (Cys-645). Cys-645 carries the S-farnesyl cysteine lipid modification. Positions 646–648 (TVS) are cleaved as a propeptide — removed in mature form.

The protein belongs to the inositol 1,4,5-trisphosphate 5-phosphatase type IV family. Interacts (when prenylated) with PDE6D; this is important for normal location in cilia.

It localises to the cytoplasm. The protein localises to the cytoskeleton. The protein resides in the cilium axoneme. Its subcellular location is the golgi apparatus. It is found in the golgi stack membrane. It localises to the cell membrane. The protein localises to the cell projection. The protein resides in the ruffle. Its subcellular location is the nucleus. The enzyme catalyses a 1,2-diacyl-sn-glycero-3-phospho-(1D-myo-inositol-4,5-bisphosphate) + H2O = a 1,2-diacyl-sn-glycero-3-phospho-(1D-myo-inositol 4-phosphate) + phosphate. The catalysed reaction is a 1,2-diacyl-sn-glycero-3-phospho-(1D-myo-inositol-3,4,5-trisphosphate) + H2O = a 1,2-diacyl-sn-glycero-3-phospho-(1D-myo-inositol-3,4-bisphosphate) + phosphate. It carries out the reaction a 1,2-diacyl-sn-glycero-3-phospho-(1D-myo-inositol-3,5-bisphosphate) + H2O = a 1,2-diacyl-sn-glycero-3-phospho-(1D-myo-inositol-3-phosphate) + phosphate. Functionally, phosphatidylinositol (PtdIns) phosphatase that specifically hydrolyzes the 5-phosphate of phosphatidylinositol-3,4,5-trisphosphate (PtdIns(3,4,5)P3), phosphatidylinositol 4,5-bisphosphate PtdIns (4,5)P2 and phosphatidylinositol 3,5-bisphosphate (PtdIns(3,5)P2). Specific for lipid substrates, inactive towards water soluble inositol phosphates. Plays an essential role in the primary cilium by controlling ciliary growth and phosphoinositide 3-kinase (PI3K) signaling and stability. This Rattus norvegicus (Rat) protein is Phosphatidylinositol polyphosphate 5-phosphatase type IV (Inpp5e).